Here is a 155-residue protein sequence, read N- to C-terminus: Large ribosomal subunit protein uL13 (155 aa).

This sequence belongs to the universal ribosomal protein uL13 family. Part of the 50S ribosomal subunit.

In terms of biological role, this protein is one of the early assembly proteins of the 50S ribosomal subunit, although it is not seen to bind rRNA by itself. It is important during the early stages of 50S assembly. The sequence is that of Large ribosomal subunit protein uL13 from Rickettsia bellii (strain OSU 85-389).